Consider the following 418-residue polypeptide: AP-3 complex subunit mu-1 (418 aa).

Residues 176-417 (NNEAYFDVIE…ITKAGKFQVR (242 aa)) enclose the MHD domain.

It belongs to the adaptor complexes medium subunit family. As to quaternary structure, the AP-3 complex associates with the BLOC-1 complex.

It localises to the golgi apparatus. It is found in the cytoplasmic vesicle membrane. In terms of biological role, part of the AP-3 complex, an adaptor-related complex which is not clathrin-associated. The complex is associated with the Golgi region as well as more peripheral structures. It facilitates the budding of vesicles from the Golgi membrane and may be directly involved in trafficking to lysosomes. In concert with the BLOC-1 complex, AP-3 is required to target cargos into vesicles assembled at cell bodies for delivery into neurites and nerve terminals. This Gallus gallus (Chicken) protein is AP-3 complex subunit mu-1 (AP3M1).